The primary structure comprises 81 residues: Probable small nuclear ribonucleoprotein G (81 aa).

In terms of domain architecture, Sm spans 5 to 76 (GQPPALKKYM…VVTVEALEPV (72 aa)).

This sequence belongs to the snRNP Sm proteins family.

It localises to the nucleus. Probable common Sm protein, is found in U1 and U2 snRNPs and may be part of the spliceosome. The sequence is that of Probable small nuclear ribonucleoprotein G (C29) from Medicago sativa (Alfalfa).